The primary structure comprises 317 residues: Melanocyte-stimulating hormone receptor (317 aa).

Over 1-37 (MSVQGPQRRLLGSLNSTSPAAPRLGLAANQTGPRCLE) the chain is Extracellular. Asn15 and Asn29 each carry an N-linked (GlcNAc...) asparagine glycan. The chain crosses the membrane as a helical span at residues 38–63 (VSVPDGLFLSLGLVSVVENVLVVAAI). At 64–72 (AKNRNLHSP) the chain is on the cytoplasmic side. A helical transmembrane segment spans residues 73 to 93 (MYYFICCLAVSDLLVSVSSVL). Residues 94 to 118 (ETAVMLLLEAGTLAGRAAVVQQLDD) are Extracellular-facing. A helical membrane pass occupies residues 119–140 (VIDVLVCGAMVSSLCFLGAIAV). The Cytoplasmic portion of the chain corresponds to 141 to 163 (DRYISIFYALRYHSIVTLPRAWR). A helical transmembrane segment spans residues 164–183 (AISAIWVASVLSSTLFIAYY). The Extracellular portion of the chain corresponds to 184–191 (DHTAVLLC). A helical transmembrane segment spans residues 192–211 (LVSFFVAMLVLMAVLYVHML). The Cytoplasmic segment spans residues 212–240 (ARACQHARGIARLHKRQRPVHQGLGLKGA). A helical membrane pass occupies residues 241–266 (ATLTILLGIFFLCWGPFFLHLSLMVL). Over 267–279 (CPRHPICGCVFKN) the chain is Extracellular. Residues 280-300 (FNLFLTLIICNSIVDPLIYAF) traverse the membrane as a helical segment. Residues 301–317 (RSQELRKTLQEVLLCSW) lie on the Cytoplasmic side of the membrane. Cys315 carries S-palmitoyl cysteine lipidation.

Belongs to the G-protein coupled receptor 1 family. In terms of assembly, interacts with MGRN1, but does not undergo MGRN1-mediated ubiquitination; this interaction competes with GNAS-binding and thus inhibits agonist-induced cAMP production. Interacts with OPN3; the interaction results in a decrease in MC1R-mediated cAMP signaling and ultimately a decrease in melanin production in melanocytes.

The protein localises to the cell membrane. Functionally, receptor for MSH (alpha, beta and gamma) and ACTH. The activity of this receptor is mediated by G proteins which activate adenylate cyclase. Mediates melanogenesis, the production of eumelanin (black/brown) and phaeomelanin (red/yellow), via regulation of cAMP signaling in melanocytes. The chain is Melanocyte-stimulating hormone receptor (MC1R) from Panthera onca (Jaguar).